The primary structure comprises 167 residues: Ribosome maturation factor RimM (167 aa).

A PRC barrel domain is found at 94 to 165 (ENEFYYSDII…KIIITPMEGL (72 aa)).

It belongs to the RimM family. As to quaternary structure, binds ribosomal protein uS19.

It is found in the cytoplasm. Functionally, an accessory protein needed during the final step in the assembly of 30S ribosomal subunit, possibly for assembly of the head region. Essential for efficient processing of 16S rRNA. May be needed both before and after RbfA during the maturation of 16S rRNA. It has affinity for free ribosomal 30S subunits but not for 70S ribosomes. In Staphylococcus aureus (strain NCTC 8325 / PS 47), this protein is Ribosome maturation factor RimM.